A 136-amino-acid polypeptide reads, in one-letter code: Protein NrdI (136 aa).

This sequence belongs to the NrdI family.

Probably involved in ribonucleotide reductase function. The chain is Protein NrdI from Erwinia tasmaniensis (strain DSM 17950 / CFBP 7177 / CIP 109463 / NCPPB 4357 / Et1/99).